The chain runs to 408 residues: 1-deoxy-D-xylulose 5-phosphate reductoisomerase (408 aa).

Residues threonine 26, glycine 27, serine 28, isoleucine 29, and asparagine 143 each contribute to the NADPH site. Lysine 144 contributes to the 1-deoxy-D-xylulose 5-phosphate binding site. NADPH is bound at residue glutamate 145. Aspartate 167 serves as a coordination point for Mn(2+). Residues serine 168, glutamate 169, serine 193, and histidine 216 each contribute to the 1-deoxy-D-xylulose 5-phosphate site. Glutamate 169 is a binding site for Mn(2+). Glycine 222 provides a ligand contact to NADPH. The 1-deoxy-D-xylulose 5-phosphate site is built by serine 229, asparagine 234, lysine 235, and glutamate 238. A Mn(2+)-binding site is contributed by glutamate 238.

The protein belongs to the DXR family. Mg(2+) is required as a cofactor. It depends on Mn(2+) as a cofactor.

The enzyme catalyses 2-C-methyl-D-erythritol 4-phosphate + NADP(+) = 1-deoxy-D-xylulose 5-phosphate + NADPH + H(+). It functions in the pathway isoprenoid biosynthesis; isopentenyl diphosphate biosynthesis via DXP pathway; isopentenyl diphosphate from 1-deoxy-D-xylulose 5-phosphate: step 1/6. In terms of biological role, catalyzes the NADPH-dependent rearrangement and reduction of 1-deoxy-D-xylulose-5-phosphate (DXP) to 2-C-methyl-D-erythritol 4-phosphate (MEP). The sequence is that of 1-deoxy-D-xylulose 5-phosphate reductoisomerase from Corynebacterium jeikeium (strain K411).